The primary structure comprises 66 residues: Large ribosomal subunit protein bL33c (66 aa).

This sequence belongs to the bacterial ribosomal protein bL33 family.

It is found in the plastid. The protein resides in the chloroplast. This chain is Large ribosomal subunit protein bL33c (rpl33), found in Arabidopsis thaliana (Mouse-ear cress).